Reading from the N-terminus, the 226-residue chain is Ribosome maturation factor RimP (226 aa).

The disordered stretch occupies residues 190–226 (VFPDTTRPQPGGKTGQRKKAQPKKPARGGAPHDDTTD). The span at 204–215 (GQRKKAQPKKPA) shows a compositional bias: basic residues.

Belongs to the RimP family.

It localises to the cytoplasm. In terms of biological role, required for maturation of 30S ribosomal subunits. The protein is Ribosome maturation factor RimP of Nitratidesulfovibrio vulgaris (strain DSM 19637 / Miyazaki F) (Desulfovibrio vulgaris).